We begin with the raw amino-acid sequence, 100 residues long: MELSPREKDKLLIFTAALLAERRKEKGLKLNYPESIALISAAIMEGAREGKTVAELMDFGRTILSRDDVMEGIAEMIHDVQVEATFPDGTKLVTVHEPIV.

Belongs to the urease gamma subunit family. As to quaternary structure, heterotrimer of UreA (gamma), UreB (beta) and UreC (alpha) subunits. Three heterotrimers associate to form the active enzyme.

It localises to the cytoplasm. The enzyme catalyses urea + 2 H2O + H(+) = hydrogencarbonate + 2 NH4(+). Its pathway is nitrogen metabolism; urea degradation; CO(2) and NH(3) from urea (urease route): step 1/1. The sequence is that of Urease subunit gamma from Teredinibacter turnerae (strain ATCC 39867 / T7901).